We begin with the raw amino-acid sequence, 949 residues long: Glycine dehydrogenase (decarboxylating) (949 aa).

At K700 the chain carries N6-(pyridoxal phosphate)lysine.

Belongs to the GcvP family. In terms of assembly, the glycine cleavage system is composed of four proteins: P, T, L and H. Requires pyridoxal 5'-phosphate as cofactor.

The enzyme catalyses N(6)-[(R)-lipoyl]-L-lysyl-[glycine-cleavage complex H protein] + glycine + H(+) = N(6)-[(R)-S(8)-aminomethyldihydrolipoyl]-L-lysyl-[glycine-cleavage complex H protein] + CO2. In terms of biological role, the glycine cleavage system catalyzes the degradation of glycine. The P protein binds the alpha-amino group of glycine through its pyridoxal phosphate cofactor; CO(2) is released and the remaining methylamine moiety is then transferred to the lipoamide cofactor of the H protein. This chain is Glycine dehydrogenase (decarboxylating), found in Flavobacterium johnsoniae (strain ATCC 17061 / DSM 2064 / JCM 8514 / BCRC 14874 / CCUG 350202 / NBRC 14942 / NCIMB 11054 / UW101) (Cytophaga johnsonae).